The chain runs to 568 residues: Urease subunit alpha (568 aa).

The 436-residue stretch at 133-568 (GGVDTHIHFI…LPLAQKYFLF (436 aa)) folds into the Urease domain. Residues His138, His140, and Lys221 each coordinate Ni(2+). Position 221 is an N6-carboxylysine (Lys221). His223 is a substrate binding site. Ni(2+)-binding residues include His250 and His276. Residue His324 is the Proton donor of the active site. Asp364 serves as a coordination point for Ni(2+).

This sequence belongs to the metallo-dependent hydrolases superfamily. Urease alpha subunit family. In terms of assembly, heterohexamer of 3 UreC (alpha) and 3 UreAB (gamma/beta) subunits. Ni cation is required as a cofactor. In terms of processing, carboxylation allows a single lysine to coordinate two nickel ions.

It localises to the cytoplasm. The catalysed reaction is urea + 2 H2O + H(+) = hydrogencarbonate + 2 NH4(+). It functions in the pathway nitrogen metabolism; urea degradation; CO(2) and NH(3) from urea (urease route): step 1/1. This Deinococcus radiodurans (strain ATCC 13939 / DSM 20539 / JCM 16871 / CCUG 27074 / LMG 4051 / NBRC 15346 / NCIMB 9279 / VKM B-1422 / R1) protein is Urease subunit alpha.